A 277-amino-acid polypeptide reads, in one-letter code: ATP synthase subunit delta (277 aa).

The protein belongs to the ATPase delta chain family. F-type ATPases have 2 components, F(1) - the catalytic core - and F(0) - the membrane proton channel. F(1) has five subunits: alpha(3), beta(3), gamma(1), delta(1), epsilon(1). F(0) has three main subunits: a(1), b(2) and c(10-14). The alpha and beta chains form an alternating ring which encloses part of the gamma chain. F(1) is attached to F(0) by a central stalk formed by the gamma and epsilon chains, while a peripheral stalk is formed by the delta and b chains.

The protein resides in the cell membrane. Its function is as follows. F(1)F(0) ATP synthase produces ATP from ADP in the presence of a proton or sodium gradient. F-type ATPases consist of two structural domains, F(1) containing the extramembraneous catalytic core and F(0) containing the membrane proton channel, linked together by a central stalk and a peripheral stalk. During catalysis, ATP synthesis in the catalytic domain of F(1) is coupled via a rotary mechanism of the central stalk subunits to proton translocation. In terms of biological role, this protein is part of the stalk that links CF(0) to CF(1). It either transmits conformational changes from CF(0) to CF(1) or is implicated in proton conduction. The chain is ATP synthase subunit delta from Bifidobacterium animalis subsp. lactis (strain AD011).